A 170-amino-acid polypeptide reads, in one-letter code: Shikimate kinase (170 aa).

Leu-11–Thr-16 provides a ligand contact to ATP. Residue Ser-15 participates in Mg(2+) binding. Residues Asp-33, Arg-57, and Gly-79 each contribute to the substrate site. Position 119 (Arg-119) interacts with ATP. Arg-137 contacts substrate.

This sequence belongs to the shikimate kinase family. In terms of assembly, monomer. It depends on Mg(2+) as a cofactor.

Its subcellular location is the cytoplasm. It catalyses the reaction shikimate + ATP = 3-phosphoshikimate + ADP + H(+). It functions in the pathway metabolic intermediate biosynthesis; chorismate biosynthesis; chorismate from D-erythrose 4-phosphate and phosphoenolpyruvate: step 5/7. In terms of biological role, catalyzes the specific phosphorylation of the 3-hydroxyl group of shikimic acid using ATP as a cosubstrate. The sequence is that of Shikimate kinase from Clostridium botulinum (strain ATCC 19397 / Type A).